Consider the following 160-residue polypeptide: Crossover junction endodeoxyribonuclease RuvC (160 aa).

Residues aspartate 7, glutamate 73, and aspartate 145 contribute to the active site. Residues aspartate 7, glutamate 73, and aspartate 145 each coordinate Mg(2+).

Belongs to the RuvC family. In terms of assembly, homodimer which binds Holliday junction (HJ) DNA. The HJ becomes 2-fold symmetrical on binding to RuvC with unstacked arms; it has a different conformation from HJ DNA in complex with RuvA. In the full resolvosome a probable DNA-RuvA(4)-RuvB(12)-RuvC(2) complex forms which resolves the HJ. Requires Mg(2+) as cofactor.

It is found in the cytoplasm. It catalyses the reaction Endonucleolytic cleavage at a junction such as a reciprocal single-stranded crossover between two homologous DNA duplexes (Holliday junction).. In terms of biological role, the RuvA-RuvB-RuvC complex processes Holliday junction (HJ) DNA during genetic recombination and DNA repair. Endonuclease that resolves HJ intermediates. Cleaves cruciform DNA by making single-stranded nicks across the HJ at symmetrical positions within the homologous arms, yielding a 5'-phosphate and a 3'-hydroxyl group; requires a central core of homology in the junction. The consensus cleavage sequence is 5'-(A/T)TT(C/G)-3'. Cleavage occurs on the 3'-side of the TT dinucleotide at the point of strand exchange. HJ branch migration catalyzed by RuvA-RuvB allows RuvC to scan DNA until it finds its consensus sequence, where it cleaves and resolves the cruciform DNA. The polypeptide is Crossover junction endodeoxyribonuclease RuvC (Synechococcus sp. (strain CC9311)).